Consider the following 500-residue polypeptide: Glycerol kinase (500 aa).

Residue Thr-13 participates in ADP binding. Residues Thr-13, Thr-14, and Ser-15 each coordinate ATP. Thr-13 contacts sn-glycerol 3-phosphate. Residue Arg-17 participates in ADP binding. 4 residues coordinate sn-glycerol 3-phosphate: Arg-83, Glu-84, Tyr-135, and Asp-244. Residues Arg-83, Glu-84, Tyr-135, Asp-244, and Gln-245 each contribute to the glycerol site. Thr-266 and Gly-309 together coordinate ADP. Residues Thr-266, Gly-309, Gln-313, and Gly-410 each contribute to the ATP site. ADP contacts are provided by Gly-410 and Asn-414.

The protein belongs to the FGGY kinase family.

The catalysed reaction is glycerol + ATP = sn-glycerol 3-phosphate + ADP + H(+). It functions in the pathway polyol metabolism; glycerol degradation via glycerol kinase pathway; sn-glycerol 3-phosphate from glycerol: step 1/1. Its activity is regulated as follows. Inhibited by fructose 1,6-bisphosphate (FBP). In terms of biological role, key enzyme in the regulation of glycerol uptake and metabolism. Catalyzes the phosphorylation of glycerol to yield sn-glycerol 3-phosphate. This chain is Glycerol kinase, found in Burkholderia cenocepacia (strain HI2424).